We begin with the raw amino-acid sequence, 156 residues long: Methylated-DNA--protein-cysteine methyltransferase (156 aa).

Cysteine 120 functions as the Nucleophile; methyl group acceptor in the catalytic mechanism.

It belongs to the MGMT family.

Its subcellular location is the cytoplasm. It carries out the reaction a 6-O-methyl-2'-deoxyguanosine in DNA + L-cysteinyl-[protein] = S-methyl-L-cysteinyl-[protein] + a 2'-deoxyguanosine in DNA. It catalyses the reaction a 4-O-methyl-thymidine in DNA + L-cysteinyl-[protein] = a thymidine in DNA + S-methyl-L-cysteinyl-[protein]. Its function is as follows. Involved in the cellular defense against the biological effects of O6-methylguanine (O6-MeG) and O4-methylthymine (O4-MeT) in DNA. Repairs the methylated nucleobase in DNA by stoichiometrically transferring the methyl group to a cysteine residue in the enzyme. This is a suicide reaction: the enzyme is irreversibly inactivated. The chain is Methylated-DNA--protein-cysteine methyltransferase from Metallosphaera sedula (strain ATCC 51363 / DSM 5348 / JCM 9185 / NBRC 15509 / TH2).